Consider the following 518-residue polypeptide: Endoglucanase 18 (518 aa).

Residues 1-35 (MANCVRCCCWLLVLMLMALAITAAVVFVRYKNGEG) lie on the Cytoplasmic side of the membrane. A helical transmembrane segment spans residues 36 to 56 (VFPFPGVPGAVDHKYADALAV). Over 57–518 (ALQFFQVQKS…STSSLARSLS (462 aa)) the chain is Extracellular. An N-linked (GlcNAc...) asparagine glycan is attached at N71. D101 (nucleophile) is an active-site residue. N-linked (GlcNAc...) asparagine glycans are attached at residues N214, N251, and N272. H436 is a catalytic residue. An N-linked (GlcNAc...) asparagine glycan is attached at N477. Active-site residues include D482 and E491.

This sequence belongs to the glycosyl hydrolase 9 (cellulase E) family.

It is found in the membrane. It carries out the reaction Endohydrolysis of (1-&gt;4)-beta-D-glucosidic linkages in cellulose, lichenin and cereal beta-D-glucans.. The protein is Endoglucanase 18 of Oryza sativa subsp. japonica (Rice).